The sequence spans 177 residues: Novel acetylcholine receptor chaperone (177 aa).

Over methionine 1–arginine 5 the chain is Cytoplasmic. Residues threonine 6–isoleucine 26 form a helical membrane-spanning segment. Topologically, residues lysine 27–serine 61 are lumenal. An interaction with NGFR region spans residues alanine 43–leucine 54. The helical transmembrane segment at isoleucine 62–valine 82 threads the bilayer. Residues proline 83–aspartate 88 are Cytoplasmic-facing. Residues valine 89–glycine 109 traverse the membrane as a helical segment. The Lumenal portion of the chain corresponds to aspartate 110–arginine 114. The chain crosses the membrane as a helical span at residues tyrosine 115–alanine 132. At arginine 133–serine 177 the chain is on the cytoplasmic side. A disordered region spans residues glutamate 136–serine 177.

It belongs to the DoxX family. May interact with NGFR. Interacts with RPN1, RPN2 and CANX.

It is found in the peroxisome membrane. The protein localises to the cytoplasmic vesicle. Its subcellular location is the endoplasmic reticulum membrane. Its function is as follows. Molecular chaperone which mediates the proper assembly and functional expression of the nicotinic acetylcholine receptors (nAChRs) throughout the brain. Essential for the proper folding, assembly, function and surface trafficking of alpha-7 (CHRNA7), alpha-4-beta-2, alpha-3-beta-2 and alpha-3-beta-4 receptors. Stably associates with ribophorin-1 (RPN1) and ribophorin-2 (RPN2) (components of the oligosaccharyl transferase (OST) complex) and with calnexin (CANX), both of which are critical for NACHO-mediated effects on CHRNA7 assembly and function. Facilitates the proper folding and assembly of alpha-6-beta-2 and alpha-6-beta-2-beta-3 receptors and acts at early stages of the nAChRs subunit assembly. Promotes the expression of the alpha-4(2):beta-2(3) stoichiometric form over the alpha-4(3):beta-2(2) form. The chain is Novel acetylcholine receptor chaperone (TMEM35A) from Bos taurus (Bovine).